The following is a 183-amino-acid chain: UPF0098 protein YbcL (183 aa).

The N-terminal stretch at 1–21 (MKTLIVSTVLAFITFSAQAAA) is a signal peptide. A disulfide bridge connects residues Cys46 and Cys129.

It belongs to the UPF0098 family. Homodimer.

The protein localises to the periplasm. This is UPF0098 protein YbcL (ybcL) from Escherichia coli (strain K12).